Reading from the N-terminus, the 73-residue chain is Neutrophil elastase 2B (73 aa).

Positions 1 to 73 (IVGGRPARPH…SGGPLVCNGL (73 aa)) constitute a Peptidase S1 domain. The Charge relay system role is filled by Ser64.

The protein belongs to the peptidase S1 family. Elastase subfamily.

Its function is as follows. May be involved in the degradation of connective tissue in chronic lung disease. The protein is Neutrophil elastase 2B of Equus caballus (Horse).